Reading from the N-terminus, the 354-residue chain is Ornithine transcarbamylase, mitochondrial (354 aa).

Residues 1-32 (MLSNLRILLNKAALRKAHTSMVRNFRYGKPVQ) constitute a mitochondrion transit peptide. Lys70 is subject to N6-acetyllysine; alternate. Position 70 is an N6-succinyllysine; alternate (Lys70). Lys80 carries the N6-succinyllysine modification. Residue Lys88 is modified to N6-acetyllysine; alternate. An N6-succinyllysine; alternate modification is found at Lys88. 90-93 (STRT) is a carbamoyl phosphate binding site. Position 133 is a phosphoserine (Ser133). Arg141 is a carbamoyl phosphate binding site. N6-acetyllysine; alternate is present on Lys144. Lys144 is subject to N6-succinyllysine; alternate. Carbamoyl phosphate-binding residues include His168 and Gln171. Residue Asn199 coordinates L-ornithine. N6-acetyllysine; alternate occurs at positions 221, 231, and 238. An N6-succinyllysine; alternate mark is found at Lys221, Lys231, and Lys238. Positions 263, 267, and 268 each coordinate L-ornithine. N6-succinyllysine is present on residues Lys274 and Lys289. Position 292 is an N6-acetyllysine; alternate (Lys292). Lys292 is subject to N6-succinyllysine; alternate. The Proton acceptor role is filled by Cys303. 303–304 (CL) is a carbamoyl phosphate binding site. N6-acetyllysine; alternate is present on Lys307. An N6-succinyllysine; alternate modification is found at Lys307. Arg330 contributes to the carbamoyl phosphate binding site.

The protein belongs to the aspartate/ornithine carbamoyltransferase superfamily. OTCase family. In terms of assembly, homotrimer. Post-translationally, acetylation at Lys-88 negatively regulates ornithine carbamoyltransferase activity in response to nutrient signals.

It localises to the mitochondrion matrix. The catalysed reaction is carbamoyl phosphate + L-ornithine = L-citrulline + phosphate + H(+). It participates in nitrogen metabolism; urea cycle; L-citrulline from L-ornithine and carbamoyl phosphate: step 1/1. Negatively regulated by lysine acetylation. Catalyzes the second step of the urea cycle, the condensation of carbamoyl phosphate with L-ornithine to form L-citrulline. The urea cycle ensures the detoxification of ammonia by converting it to urea for excretion. This chain is Ornithine transcarbamylase, mitochondrial, found in Rattus norvegicus (Rat).